Reading from the N-terminus, the 117-residue chain is Immunoglobulin heavy variable 7-4-1 (117 aa).

The N-terminal stretch at 1 to 19 (MDWTWRILFLVAAATGAHS) is a signal peptide. The interval 20–44 (QVQLVQSGSELKKPGASVKVSCKAS) is framework-1. Positions 20 to 117 (QVQLVQSGSE…EDTAVYYCAR (98 aa)) constitute an Ig-like domain. The cysteines at positions 41 and 115 are disulfide-linked. The tract at residues 45 to 52 (GYTFTSYA) is complementarity-determining-1. The interval 53–69 (MNWVRQAPGQGLEWMGW) is framework-2. Residues 70 to 77 (INTNTGNP) form a complementarity-determining-2 region. A framework-3 region spans residues 78–115 (TYAQGFTGRFVFSLDTSVSTAYLQICSLKAEDTAVYYC). Residues 116–117 (AR) form a complementarity-determining-3 region.

In terms of assembly, immunoglobulins are composed of two identical heavy chains and two identical light chains; disulfide-linked.

The protein resides in the secreted. Its subcellular location is the cell membrane. Its function is as follows. V region of the variable domain of immunoglobulin heavy chains that participates in the antigen recognition. Immunoglobulins, also known as antibodies, are membrane-bound or secreted glycoproteins produced by B lymphocytes. In the recognition phase of humoral immunity, the membrane-bound immunoglobulins serve as receptors which, upon binding of a specific antigen, trigger the clonal expansion and differentiation of B lymphocytes into immunoglobulins-secreting plasma cells. Secreted immunoglobulins mediate the effector phase of humoral immunity, which results in the elimination of bound antigens. The antigen binding site is formed by the variable domain of one heavy chain, together with that of its associated light chain. Thus, each immunoglobulin has two antigen binding sites with remarkable affinity for a particular antigen. The variable domains are assembled by a process called V-(D)-J rearrangement and can then be subjected to somatic hypermutations which, after exposure to antigen and selection, allow affinity maturation for a particular antigen. The chain is Immunoglobulin heavy variable 7-4-1 from Homo sapiens (Human).